The chain runs to 339 residues: Isopentenyl-diphosphate delta-isomerase (339 aa).

7-8 serves as a coordination point for substrate; that stretch reads RK. Residues serine 65, 66-68, serine 96, and asparagine 125 contribute to the FMN site; that span reads SMT. 96–98 is a substrate binding site; sequence SQR. Glutamine 160 serves as a coordination point for substrate. Glutamate 161 is a Mg(2+) binding site. Residues lysine 192, threonine 222, and 293-294 each bind FMN; that span reads AG.

This sequence belongs to the IPP isomerase type 2 family. Homooctamer. Dimer of tetramers. Requires FMN as cofactor. It depends on NADPH as a cofactor. Mg(2+) is required as a cofactor.

It is found in the cytoplasm. It catalyses the reaction isopentenyl diphosphate = dimethylallyl diphosphate. Functionally, involved in the biosynthesis of isoprenoids. Catalyzes the 1,3-allylic rearrangement of the homoallylic substrate isopentenyl (IPP) to its allylic isomer, dimethylallyl diphosphate (DMAPP). The polypeptide is Isopentenyl-diphosphate delta-isomerase (Vibrio parahaemolyticus serotype O3:K6 (strain RIMD 2210633)).